Here is a 261-residue protein sequence, read N- to C-terminus: Tyrosine phosphatase-like protein H5 (261 aa).

The 236-residue stretch at 26-261 (LIKKEHDKVL…ESVEQEYFVP (236 aa)) folds into the Tyrosine-protein phosphatase domain.

Belongs to the protein-tyrosine phosphatase family.

This Microplitis demolitor bracovirus (isolate Webb) (MdBV) protein is Tyrosine phosphatase-like protein H5 (H6).